A 380-amino-acid chain; its full sequence is Succinate--CoA ligase [ADP-forming] subunit beta (380 aa).

Residues 9–237 (RDLLARFGIP…PSAEPEAERR (229 aa)) enclose the ATP-grasp domain. ATP is bound by residues Lys45, 52–54 (GRG), Val94, and Glu99. The Mg(2+) site is built by Asn192 and Asp206. Substrate is bound by residues Asn257 and 314–316 (GIT).

The protein belongs to the succinate/malate CoA ligase beta subunit family. Heterotetramer of two alpha and two beta subunits. Mg(2+) is required as a cofactor.

It carries out the reaction succinate + ATP + CoA = succinyl-CoA + ADP + phosphate. It catalyses the reaction GTP + succinate + CoA = succinyl-CoA + GDP + phosphate. Its pathway is carbohydrate metabolism; tricarboxylic acid cycle; succinate from succinyl-CoA (ligase route): step 1/1. In terms of biological role, succinyl-CoA synthetase functions in the citric acid cycle (TCA), coupling the hydrolysis of succinyl-CoA to the synthesis of either ATP or GTP and thus represents the only step of substrate-level phosphorylation in the TCA. The beta subunit provides nucleotide specificity of the enzyme and binds the substrate succinate, while the binding sites for coenzyme A and phosphate are found in the alpha subunit. The chain is Succinate--CoA ligase [ADP-forming] subunit beta from Chloroflexus aurantiacus (strain ATCC 29366 / DSM 635 / J-10-fl).